Reading from the N-terminus, the 393-residue chain is Chalcone synthase DII (393 aa).

Residue Cys-164 is part of the active site.

It belongs to the thiolase-like superfamily. Chalcone/stilbene synthases family.

The enzyme catalyses (E)-4-coumaroyl-CoA + 3 malonyl-CoA + 3 H(+) = 2',4,4',6'-tetrahydroxychalcone + 3 CO2 + 4 CoA. The protein operates within secondary metabolite biosynthesis; flavonoid biosynthesis. In terms of biological role, the primary product of this enzyme is 4,2',4',6'-tetrahydroxychalcone (also termed naringenin-chalcone or chalcone) which can under specific conditions spontaneously isomerize into naringenin. This chain is Chalcone synthase DII (CHS-DII), found in Ipomoea batatas (Sweet potato).